We begin with the raw amino-acid sequence, 639 residues long: MNRFTAYAALFFIFSLCSTAKEAGFQHPAFNFRGTSTMSALSGDYSAAPTPLYKSWALPSSLNLTTQPPPLLTDRSYYELVQALISKMRLDCQTVGDMTWRHLSEMLFASWNSVKEVSLKAASVTLWAIISIWFGLYWTLARLITLFLWTFSIEALCLILLGCITSLIYKGALSLSEHLPVFLFMSPLKIIWRAAFSKRNYKNEKAVEGYKGFSVPQKPPKSAVIELQHENGSHLGYANCIRLYSGENALVTAEHCLEGAFATSLKTGNRIPMSTFFPIFKSARNDISILVGPPNWEGLLSVKGAHFITADKIGKGPASFYTLEKGEWMCHSATIDGAHHQFVSVLCNTGPGYSGTGFWSSKNLLGVLKGFPLEEECNYNVMSVIPSIPGITSPNYVFESTAVKGRVFSDETVKELEREASEAVKKLARFKSLTGKNWANDYDSDEDYGLEKEAATNAPAEKTAQTNSAEKTAPSTSAEKTAPTNKPLNGRAAPPAKTNGNSDIPDAAISAPPMDKMVEQIITAMVGRINLSEIEEKIVSRVSQKALQKPKQNKRGRRGGKNKQNNLPPTSTQSISGAPKKKAVPQASGSAGISPATTTPAPKEKPSGGKNSAKFIPSWRIKQQDSAGQKPDLKLNSKA.

The N-terminal stretch at 1–20 is a signal peptide; it reads MNRFTAYAALFFIFSLCSTA. 3 helical membrane-spanning segments follow: residues 121-141, 144-164, and 172-192; these read AASV…WTLA, ITLF…LGCI, and ALSL…KIIW. Positions 207-399 constitute a Peptidase S39 domain; it reads VEGYKGFSVP…GITSPNYVFE (193 aa). Catalysis depends on for protease activity residues His-255, Asp-286, and Ser-354. Disordered regions lie at residues 456 to 510 and 542 to 639; these read TNAP…AAIS and VSQK…NSKA. A compositionally biased stretch (polar residues) spans 463 to 487; the sequence is TAQTNSAEKTAPSTSAEKTAPTNKP. The segment covering 551–561 has biased composition (basic residues); that stretch reads KQNKRGRRGGK. The span at 562–576 shows a compositional bias: polar residues; it reads NKQNNLPPTSTQSIS.

The protein belongs to the peptidase S39B family. Post-translationally, specific enzymatic cleavages in vivo yield mature proteins. The protease probably cleaves itself and releases the VPg protein. The VPg protein is probably further cleaved in its C-terminus.

Its subcellular location is the membrane. In terms of biological role, precursor from which the VPg molecule is probably released at the onset of the RNA synthesis. Essential for virus replication. The chain is Protein P1 from Solanum tuberosum (Potato).